The chain runs to 399 residues: Probable peptidoglycan glycosyltransferase FtsW (399 aa).

The next 9 helical transmembrane spans lie at 33 to 53 (LVWL…STSI), 71 to 91 (IFYF…PIIF), 98 to 118 (IILI…HSIH), 160 to 180 (FWGF…LLAE), 182 to 202 (DLGT…LSGA), 204 to 224 (IGQF…LILL), 287 to 307 (IIGE…IFTI), 324 to 344 (IFSG…TSIN), and 359 to 379 (LPFI…IFFL).

The protein belongs to the SEDS family. FtsW subfamily.

Its subcellular location is the cell inner membrane. The catalysed reaction is [GlcNAc-(1-&gt;4)-Mur2Ac(oyl-L-Ala-gamma-D-Glu-L-Lys-D-Ala-D-Ala)](n)-di-trans,octa-cis-undecaprenyl diphosphate + beta-D-GlcNAc-(1-&gt;4)-Mur2Ac(oyl-L-Ala-gamma-D-Glu-L-Lys-D-Ala-D-Ala)-di-trans,octa-cis-undecaprenyl diphosphate = [GlcNAc-(1-&gt;4)-Mur2Ac(oyl-L-Ala-gamma-D-Glu-L-Lys-D-Ala-D-Ala)](n+1)-di-trans,octa-cis-undecaprenyl diphosphate + di-trans,octa-cis-undecaprenyl diphosphate + H(+). It functions in the pathway cell wall biogenesis; peptidoglycan biosynthesis. In terms of biological role, peptidoglycan polymerase that is essential for cell division. This chain is Probable peptidoglycan glycosyltransferase FtsW, found in Buchnera aphidicola subsp. Acyrthosiphon pisum (strain APS) (Acyrthosiphon pisum symbiotic bacterium).